We begin with the raw amino-acid sequence, 353 residues long: UDP-N-acetylglucosamine--N-acetylmuramyl-(pentapeptide) pyrophosphoryl-undecaprenol N-acetylglucosamine transferase (353 aa).

UDP-N-acetyl-alpha-D-glucosamine-binding positions include 14-16 (TGG), asparagine 126, arginine 162, serine 190, isoleucine 243, 262-267 (ALTVSE), and glutamine 287.

This sequence belongs to the glycosyltransferase 28 family. MurG subfamily.

It localises to the cell inner membrane. The enzyme catalyses di-trans,octa-cis-undecaprenyl diphospho-N-acetyl-alpha-D-muramoyl-L-alanyl-D-glutamyl-meso-2,6-diaminopimeloyl-D-alanyl-D-alanine + UDP-N-acetyl-alpha-D-glucosamine = di-trans,octa-cis-undecaprenyl diphospho-[N-acetyl-alpha-D-glucosaminyl-(1-&gt;4)]-N-acetyl-alpha-D-muramoyl-L-alanyl-D-glutamyl-meso-2,6-diaminopimeloyl-D-alanyl-D-alanine + UDP + H(+). The protein operates within cell wall biogenesis; peptidoglycan biosynthesis. Cell wall formation. Catalyzes the transfer of a GlcNAc subunit on undecaprenyl-pyrophosphoryl-MurNAc-pentapeptide (lipid intermediate I) to form undecaprenyl-pyrophosphoryl-MurNAc-(pentapeptide)GlcNAc (lipid intermediate II). In Vibrio atlanticus (strain LGP32) (Vibrio splendidus (strain Mel32)), this protein is UDP-N-acetylglucosamine--N-acetylmuramyl-(pentapeptide) pyrophosphoryl-undecaprenol N-acetylglucosamine transferase.